Reading from the N-terminus, the 476-residue chain is 8-amino-7-oxononanoate synthase (476 aa).

Position 24 (R24) interacts with substrate. G171–F172 contacts pyridoxal 5'-phosphate. H210 contributes to the substrate binding site. Pyridoxal 5'-phosphate-binding positions include S260, D285–H288, and T316–K319. Residue K319 is modified to N6-(pyridoxal phosphate)lysine. A substrate-binding site is contributed by T427. A Peroxisomal targeting signal PTS1 motif is present at residues P474–L476.

Belongs to the class-II pyridoxal-phosphate-dependent aminotransferase family. BioF subfamily. As to quaternary structure, monomer. The cofactor is pyridoxal 5'-phosphate.

Its subcellular location is the cytoplasm. It is found in the cytosol. It localises to the peroxisome. It carries out the reaction 6-carboxyhexanoyl-[ACP] + L-alanine + H(+) = (8S)-8-amino-7-oxononanoate + holo-[ACP] + CO2. It participates in cofactor biosynthesis; biotin biosynthesis; 8-amino-7-oxononanoate from pimeloyl-CoA: step 1/1. Functionally, catalyzes the decarboxylative condensation of pimeloyl-[acyl-carrier protein] and L-alanine to produce 8-amino-7-oxononanoate (AON), [acyl-carrier protein], and carbon dioxide. Required for the biosynthesis of D-biotin that prevents light-mediated cell death and modulates defense gene expression, probably by avoiding hydrogen peroxide H(2)O(2) accumulation. This Arabidopsis thaliana (Mouse-ear cress) protein is 8-amino-7-oxononanoate synthase.